We begin with the raw amino-acid sequence, 481 residues long: Zinc finger CCCH domain-containing protein 4 (481 aa).

Residues 157–184 (RNRAHVCSFFIRGECTRGAECPYRHEMP) form a C3H1-type zinc finger. The RRM domain occupies 228 to 301 (KTLYVGGLNS…QRLKLTWGRP (74 aa)). The tract at residues 329–481 (HNQPPPMQQY…DVSTATGSSQ (153 aa)) is disordered. Residues 331 to 345 (QPPPMQQYYMHPPPA) are compositionally biased toward pro residues. 2 stretches are compositionally biased toward low complexity: residues 369–389 (AGGSSTENNGASSSSYMMPPH) and 399–410 (YMPSPYQQQYPP). The span at 423 to 444 (APPPAAYPYPQQPGPGSRPAPS) shows a compositional bias: pro residues. Residues 449 to 471 (SAISPDSAPAGSGAPSGSSQQAP) are compositionally biased toward low complexity. Polar residues predominate over residues 472-481 (DVSTATGSSQ).

The sequence is that of Zinc finger CCCH domain-containing protein 4 from Arabidopsis thaliana (Mouse-ear cress).